The primary structure comprises 786 residues: Aculeacin-A acylase (786 aa).

The first 22 residues, 1 to 22, serve as a signal peptide directing secretion; it reads MTSSYMRLKAAAIAFGVIVATA. Residues 23-34 constitute a propeptide that is removed on maturation; that stretch reads AVPSPASGREHD. Positions 35 to 130 are substrate-binding; sequence GGYAALIRRA…PRDGVRAPCD (96 aa). The propeptide at 215–229 is spacer peptide; that stretch reads AAIAAALDGTSAGIG. The possible recognition-sequence of an AAC processing enzyme stretch occupies residues 220–239; that stretch reads ALDGTSAGIGSNAYGLGAQA. Serine 230 serves as the catalytic Nucleophile. The tract at residues 658–689 is disordered; that stretch reads ACNGSPASPSTRSVGDIHTDSRGERRIPIHGG. Residues 672 to 684 are compositionally biased toward basic and acidic residues; the sequence is GDIHTDSRGERRI.

This sequence belongs to the peptidase S45 family. Heterodimer of a small subunit and a large subunit processed from the same precursor.

The protein resides in the secreted. In terms of biological role, catalyzes the hydrolysis of the palmitoyl moiety of the antifungal antibiotic, aculeacin-A, giving a hexapeptide moiety and a long chain fatty acid. This is Aculeacin-A acylase (aac) from Actinoplanes utahensis.